We begin with the raw amino-acid sequence, 339 residues long: MAQSITFTFGAVAAAGIALAAGTAAQADTWRYAFEEAMTDVQGVYAQKFKEEIEANSDHEIQLFPYGTLGESADIMEQTQDGILQFVDQSPGFTGSLIPEAQVFFVPYLLPTDQDHLARFFKESKAINDMFKPLYADQGLELLNMFPEGEVAMTTKTPVTTCSDLDEVKFRVMTNPLLVESYKAFGATPTPLPWGEVYGGLQTNVIQGQENPTFFLYSTKIYEVTDYITYAGHNNFTTAVMANKDFYDGLSAEDQQLVQNAALAAYDHTVVYQQQAADTELAKIMEAKPEMQVTVLTDEQRSCFKEAAAEVEAKFIEMTGDSGAAILKQMKADLAATAN.

The first 20 residues, 1 to 20 (MAQSITFTFGAVAAAGIALA), serve as a signal peptide directing secretion. Residues glutamate 36, arginine 171, asparagine 211, phenylalanine 215, and phenylalanine 236 each contribute to the L-ectoine site. Residues cysteine 162 and cysteine 303 are joined by a disulfide bond.

The protein belongs to the bacterial solute-binding protein 7 family. As to quaternary structure, monomer. The complex comprises the extracytoplasmic solute receptor protein UehA, and the two transmembrane proteins UehB and UehC.

Its subcellular location is the periplasm. In terms of biological role, part of the tripartite ATP-independent periplasmic (TRAP) transport system UehABC, which imports both ectoine and 5-hydroxyectoine as nutrients, and not as osmoprotectants. UehA binds both ectoine and 5-hydroxyectoine with high specificity and affinity. This Ruegeria pomeroyi (strain ATCC 700808 / DSM 15171 / DSS-3) (Silicibacter pomeroyi) protein is Ectoine/5-hydroxyectoine-binding periplasmic protein UehA.